The following is a 76-amino-acid chain: uncharacterized protein (76 aa).

The tract at residues 1–24 (MPLRLCQGRKDRASDPVRDDGSPP) is disordered. A compositionally biased stretch (basic and acidic residues) spans 8 to 22 (GRKDRASDPVRDDGS).

This is an uncharacterized protein from Dryophytes versicolor (chameleon treefrog).